Reading from the N-terminus, the 875-residue chain is uncharacterized protein (875 aa).

Residues Pro-83–Leu-149 form a disordered region. A compositionally biased stretch (pro residues) spans Gln-101–Gln-147.

This is an uncharacterized protein from Orgyia pseudotsugata multicapsid polyhedrosis virus (OpMNPV).